Reading from the N-terminus, the 183-residue chain is Ribosome-recycling factor (183 aa).

The protein belongs to the RRF family.

Its subcellular location is the cytoplasm. Its function is as follows. Responsible for the release of ribosomes from messenger RNA at the termination of protein biosynthesis. May increase the efficiency of translation by recycling ribosomes from one round of translation to another. In Bifidobacterium longum subsp. infantis (strain ATCC 15697 / DSM 20088 / JCM 1222 / NCTC 11817 / S12), this protein is Ribosome-recycling factor.